Here is a 206-residue protein sequence, read N- to C-terminus: Octanoyltransferase (206 aa).

A BPL/LPL catalytic domain is found at 30 to 206; that stretch reads PETNDEIWLV…EFVTLLNNSI (177 aa). Substrate is bound by residues 69-76, 137-139, and 150-152; these read RGGQVTYH, SLG, and GIA. Residue C168 is the Acyl-thioester intermediate of the active site.

This sequence belongs to the LipB family.

It is found in the cytoplasm. The catalysed reaction is octanoyl-[ACP] + L-lysyl-[protein] = N(6)-octanoyl-L-lysyl-[protein] + holo-[ACP] + H(+). The protein operates within protein modification; protein lipoylation via endogenous pathway; protein N(6)-(lipoyl)lysine from octanoyl-[acyl-carrier-protein]: step 1/2. Catalyzes the transfer of endogenously produced octanoic acid from octanoyl-acyl-carrier-protein onto the lipoyl domains of lipoate-dependent enzymes. Lipoyl-ACP can also act as a substrate although octanoyl-ACP is likely to be the physiological substrate. This chain is Octanoyltransferase, found in Francisella tularensis subsp. holarctica (strain FTNF002-00 / FTA).